Here is a 360-residue protein sequence, read N- to C-terminus: DNA integrity scanning protein DisA (360 aa).

The DAC domain occupies 9 to 147; it reads DNDLMDILNI…NNIKYVLRDS (139 aa). Residues glycine 76, leucine 94, and 107–111 contribute to the ATP site; that span reads TRHRT.

Belongs to the DisA family. As to quaternary structure, homooctamer. Requires Mg(2+) as cofactor.

It carries out the reaction 2 ATP = 3',3'-c-di-AMP + 2 diphosphate. Its function is as follows. Participates in a DNA-damage check-point that is active prior to asymmetric division when DNA is damaged. DisA forms globular foci that rapidly scan along the chromosomes during sporulation, searching for lesions. When a lesion is present, DisA pauses at the lesion site. This triggers a cellular response that culminates in a temporary block in sporulation initiation. Also has diadenylate cyclase activity, catalyzing the condensation of 2 ATP molecules into cyclic di-AMP (c-di-AMP). c-di-AMP acts as a signaling molecule that couples DNA integrity with progression of sporulation. The rise in c-di-AMP level generated by DisA while scanning the chromosome, operates as a positive signal that advances sporulation; upon encountering a lesion, the DisA focus arrests at the damaged site and halts c-di-AMP synthesis. The chain is DNA integrity scanning protein DisA from Clostridium tetani (strain Massachusetts / E88).